Consider the following 218-residue polypeptide: Runt-related transcription factor 2 (218 aa).

A Runt domain is found at 67–195; the sequence is RGHKFYLEKK…TVDGPREPRR (129 aa). The segment at 122-138 is required for interaction with FOXO1; that stretch reads VMAGNDENYSAELRNAS. The disordered stretch occupies residues 189 to 218; it reads GPREPRRHRQKLDDSKPSLFSDRLSDLGRI. Lys204 participates in a covalent cross-link: Glycyl lysine isopeptide (Lys-Gly) (interchain with G-Cter in SUMO2).

In terms of assembly, heterodimer of an alpha and a beta subunit. The alpha subunit binds DNA as a monomer and through the Runt domain. DNA-binding is increased by heterodimerization. Interacts with XRCC6 (Ku70) and XRCC5 (Ku80). Interacts with CCNB1, KAT6A and KAT6B. Interacts with HIVEP3. Interacts with IFI204. Interaction with SATB2; the interaction results in enhanced DNA binding and transactivation by these transcription factors. Binds to HIPK3. Interacts with FOXO1 (via a C-terminal region); the interaction inhibits RUNX2 transcriptional activity towards BGLAP. Interacts with FOXP3. Interacts with TMEM119. Interacts with OLFM2. Interacts with IPO7; the interaction inhibits RUNX2 nuclear translocation in osteoblasts. Phosphorylated; probably by MAP kinases (MAPK). Phosphorylation by HIPK3 is required for the SPEN/MINT and FGF2 transactivation during osteoblastic differentiation.

Its subcellular location is the nucleus. It is found in the cytoplasm. In terms of biological role, transcription factor involved in osteoblastic differentiation and skeletal morphogenesis. Essential for the maturation of osteoblasts and both intramembranous and endochondral ossification. CBF binds to the core site, 5'-PYGPYGGT-3', of a number of enhancers and promoters, including murine leukemia virus, polyomavirus enhancer, T-cell receptor enhancers, osteocalcin, osteopontin, bone sialoprotein, alpha 1(I) collagen, LCK, IL-3 and GM-CSF promoters. Inhibits KAT6B-dependent transcriptional activation. In osteoblasts, supports transcription activation: synergizes with SPEN/MINT to enhance FGFR2-mediated activation of the osteocalcin FGF-responsive element (OCFRE). This Rattus norvegicus (Rat) protein is Runt-related transcription factor 2 (Runx2).